Here is a 189-residue protein sequence, read N- to C-terminus: Hypoxanthine/guanine phosphoribosyltransferase (189 aa).

Belongs to the purine/pyrimidine phosphoribosyltransferase family. Archaeal HPRT subfamily. Homodimer.

It localises to the cytoplasm. The enzyme catalyses IMP + diphosphate = hypoxanthine + 5-phospho-alpha-D-ribose 1-diphosphate. It catalyses the reaction GMP + diphosphate = guanine + 5-phospho-alpha-D-ribose 1-diphosphate. It functions in the pathway purine metabolism; IMP biosynthesis via salvage pathway; IMP from hypoxanthine: step 1/1. Functionally, catalyzes a salvage reaction resulting in the formation of IMP that is energically less costly than de novo synthesis. This chain is Hypoxanthine/guanine phosphoribosyltransferase, found in Methanothrix soehngenii (strain ATCC 5969 / DSM 3671 / JCM 10134 / NBRC 103675 / OCM 69 / GP-6) (Methanosaeta concilii).